Here is a 152-residue protein sequence, read N- to C-terminus: MANLERTFIAIKPDGVQRGLVGEIIKRFEQKGFRLVAMKFLRASEEHLKQHYIDLKDRPFFPGLVKYMNSGPVVAMVWEGLNVVKTGRVMLGETNPADSKPGTIRGDFCIQVGRNIIHGSDSVKSAEKEISLWFKPEELVDYKSCAHDWVYE.

Residues 1–66 (MANLERTFIA…DRPFFPGLVK (66 aa)) form an interaction with AKAP13 region. Residues lysine 12, phenylalanine 60, arginine 88, threonine 94, arginine 105, and asparagine 115 each coordinate ATP. The active-site Pros-phosphohistidine intermediate is the histidine 118.

The protein belongs to the NDK family. Hexamer of two different chains: An and B (A6, A5B, A4B2, A3B3, A2B4, AB5, B6). Interacts with CAPN8. Interacts with AKAP13. Interacts with ITGB1BP1 (via C-terminal domain region). Interacts with BCL2L10. Mg(2+) serves as cofactor. In terms of tissue distribution, ubiquitously expressed.

It localises to the cytoplasm. Its subcellular location is the cell projection. The protein localises to the lamellipodium. The protein resides in the ruffle. It is found in the perinuclear region. It localises to the nucleus. The catalysed reaction is a 2'-deoxyribonucleoside 5'-diphosphate + ATP = a 2'-deoxyribonucleoside 5'-triphosphate + ADP. The enzyme catalyses a ribonucleoside 5'-diphosphate + ATP = a ribonucleoside 5'-triphosphate + ADP. It catalyses the reaction ATP + protein L-histidine = ADP + protein N-phospho-L-histidine.. Major role in the synthesis of nucleoside triphosphates other than ATP. The ATP gamma phosphate is transferred to the NDP beta phosphate via a ping-pong mechanism, using a phosphorylated active-site intermediate. Negatively regulates Rho activity by interacting with AKAP13/LBC. Acts as a transcriptional activator of the MYC gene; binds DNA non-specifically. Binds to both single-stranded guanine- and cytosine-rich strands within the nuclease hypersensitive element (NHE) III(1) region of the MYC gene promoter. Does not bind to duplex NHE III(1). Has G-quadruplex (G4) DNA-binding activity, which is independent of its nucleotide-binding and kinase activity. Binds both folded and unfolded G4 with similar low nanomolar affinities. Stabilizes folded G4s regardless of whether they are prefolded or not. Exhibits histidine protein kinase activity. The chain is Nucleoside diphosphate kinase B (NME2) from Homo sapiens (Human).